Consider the following 445-residue polypeptide: Exodeoxyribonuclease 7 large subunit (445 aa).

The protein belongs to the XseA family. In terms of assembly, heterooligomer composed of large and small subunits.

It is found in the cytoplasm. It carries out the reaction Exonucleolytic cleavage in either 5'- to 3'- or 3'- to 5'-direction to yield nucleoside 5'-phosphates.. Functionally, bidirectionally degrades single-stranded DNA into large acid-insoluble oligonucleotides, which are then degraded further into small acid-soluble oligonucleotides. This Staphylococcus epidermidis (strain ATCC 35984 / DSM 28319 / BCRC 17069 / CCUG 31568 / BM 3577 / RP62A) protein is Exodeoxyribonuclease 7 large subunit.